The sequence spans 314 residues: DNA-directed RNA polymerase subunit alpha (314 aa).

The alpha N-terminal domain (alpha-NTD) stretch occupies residues 1–228; the sequence is MIEIEKPKIE…EHLNIFVGLT (228 aa). Positions 245–314 are alpha C-terminal domain (alpha-CTD); the sequence is KEKVLEMTIE…ELGLGLRKDD (70 aa).

It belongs to the RNA polymerase alpha chain family. Homodimer. The RNAP catalytic core consists of 2 alpha, 1 beta, 1 beta' and 1 omega subunit. When a sigma factor is associated with the core the holoenzyme is formed, which can initiate transcription.

It carries out the reaction RNA(n) + a ribonucleoside 5'-triphosphate = RNA(n+1) + diphosphate. DNA-dependent RNA polymerase catalyzes the transcription of DNA into RNA using the four ribonucleoside triphosphates as substrates. This Bacillus licheniformis (strain ATCC 14580 / DSM 13 / JCM 2505 / CCUG 7422 / NBRC 12200 / NCIMB 9375 / NCTC 10341 / NRRL NRS-1264 / Gibson 46) protein is DNA-directed RNA polymerase subunit alpha.